A 555-amino-acid polypeptide reads, in one-letter code: Glypican-6 (555 aa).

The first 23 residues, 1–23 (MPSWIRAVILPLSGLLLTLPAAA), serve as a signal peptide directing secretion. Positions 348–357 (PALRSARSAP) are enriched in low complexity. 2 disordered regions span residues 348 to 376 (PALR…PTTA) and 480 to 501 (GNDV…GSGC). S530 carries the GPI-anchor amidated serine lipid modification. The propeptide at 531–555 (ASKFSSSLISWSLVCMVLALQRLYR) is removed in mature form.

This sequence belongs to the glypican family. As to expression, in the cartilage growth-plate, gradient of expression with highest levels from the proliferative and pre-hypertrophic zones to lowest, if any, in the hypertrophic zones (at protein level).

Its subcellular location is the cell membrane. The protein resides in the secreted. It localises to the extracellular space. Functionally, cell surface proteoglycan that bears heparan sulfate. Putative cell surface coreceptor for growth factors, extracellular matrix proteins, proteases and anti-proteases. Enhances migration and invasion of cancer cells through WNT5A signaling. The sequence is that of Glypican-6 (Gpc6) from Mus musculus (Mouse).